We begin with the raw amino-acid sequence, 291 residues long: Ecto-ADP-ribosyltransferase 5 (291 aa).

The signal sequence occupies residues 1 to 22 (MALAALMIALGSLGLHTWQAQA). Cys-42 and Cys-258 are disulfide-bonded. The 191-residue stretch at 62 to 252 (ALLRESWEAA…LVTLWSYNQT (191 aa)) folds into the TR mART core domain. Tyr-99 serves as a coordination point for NAD(+). N-linked (GlcNAc...) asparagine glycosylation occurs at Asn-101. NAD(+)-binding residues include Arg-160 and Gln-180. Arg-160 is an active-site residue. Ser-183 is an active-site residue. The N-linked (GlcNAc...) asparagine glycan is linked to Asn-196. NAD(+) is bound at residue Ser-214. Glu-221 is a catalytic residue. The N-linked (GlcNAc...) asparagine glycan is linked to Asn-250.

The protein belongs to the Arg-specific ADP-ribosyltransferase family.

The protein resides in the secreted. It catalyses the reaction L-arginyl-[protein] + NAD(+) = N(omega)-(ADP-D-ribosyl)-L-arginyl-[protein] + nicotinamide + H(+). This is Ecto-ADP-ribosyltransferase 5 (ART5) from Homo sapiens (Human).